The following is a 372-amino-acid chain: Cytoplasmic tRNA 2-thiolation protein 1 (372 aa).

Residues G335–F372 form a disordered region. Over residues G341 to C351 the composition is skewed to gly residues. A compositionally biased stretch (basic and acidic residues) spans E361–F372.

The protein belongs to the TtcA family. CTU1/NCS6/ATPBD3 subfamily.

It localises to the cytoplasm. The protein operates within tRNA modification; 5-methoxycarbonylmethyl-2-thiouridine-tRNA biosynthesis. Functionally, plays a central role in 2-thiolation of mcm(5)S(2)U at tRNA wobble positions of tRNA(Lys), tRNA(Glu) and tRNA(Gln). Directly binds tRNAs and probably acts by catalyzing adenylation of tRNAs, an intermediate required for 2-thiolation. It is unclear whether it acts as a sulfurtransferase that transfers sulfur from thiocarboxylated URM1 onto the uridine of tRNAs at wobble position. This Caenorhabditis briggsae protein is Cytoplasmic tRNA 2-thiolation protein 1.